Here is a 201-residue protein sequence, read N- to C-terminus: Type III effector protein HopBF1 (201 aa).

ATP is bound by residues serine 39, glutamine 40, lysine 41, aspartate 106, isoleucine 108, and aspartate 113. Residue aspartate 154 is part of the active site. Glutamine 156 is an ATP binding site.

This sequence belongs to the HopBF1 family.

It localises to the secreted. It is found in the host cell. It catalyses the reaction L-seryl-[protein] + ATP = O-phospho-L-seryl-[protein] + ADP + H(+). Its function is as follows. Effector protein that targets and inactivates the plant molecular chaperone HSP90 during infection. HopBF1 is recognized by HSP90 as a host client. As a result, HopBF1 phosphorylates HSP90, leading to the inactivation of the HSP90 ATPase activity and chaperone function. Phosphorylation of HSP90 prevents activation of immune receptors that trigger the hypersensitive response in plants. HopBF1 is sufficient to cause severe disease symptoms in plants infected with P.syringae. In vitro, can phosphorylate the recombinant yeast HSP82 (HSP90) on Ser-99, Triticum aestivum (wheat) HSP90 and human HSP 90-beta, but not the prokaryotic HSP90 orthologs, HtpG from E.coli and P.syringae. Does not act on generic protein kinase substrates such as casein and myelin basic protein, as well as the yeast HSP70s and Bip chaperones. This chain is Type III effector protein HopBF1, found in Pseudomonas syringae pv. syringae (strain FF5).